The primary structure comprises 100 residues: Urease subunit gamma (100 aa).

This sequence belongs to the urease gamma subunit family. As to quaternary structure, heterotrimer of UreA (gamma), UreB (beta) and UreC (alpha) subunits. Three heterotrimers associate to form the active enzyme.

It is found in the cytoplasm. It carries out the reaction urea + 2 H2O + H(+) = hydrogencarbonate + 2 NH4(+). It participates in nitrogen metabolism; urea degradation; CO(2) and NH(3) from urea (urease route): step 1/1. The protein is Urease subunit gamma of Paraburkholderia phytofirmans (strain DSM 17436 / LMG 22146 / PsJN) (Burkholderia phytofirmans).